We begin with the raw amino-acid sequence, 156 residues long: Ribosomal RNA large subunit methyltransferase H (156 aa).

S-adenosyl-L-methionine contacts are provided by residues leucine 73, glycine 104, and 123–128 (LSPLTL).

It belongs to the RNA methyltransferase RlmH family. Homodimer.

Its subcellular location is the cytoplasm. It catalyses the reaction pseudouridine(1915) in 23S rRNA + S-adenosyl-L-methionine = N(3)-methylpseudouridine(1915) in 23S rRNA + S-adenosyl-L-homocysteine + H(+). Its function is as follows. Specifically methylates the pseudouridine at position 1915 (m3Psi1915) in 23S rRNA. The protein is Ribosomal RNA large subunit methyltransferase H of Pseudoalteromonas atlantica (strain T6c / ATCC BAA-1087).